Consider the following 134-residue polypeptide: ATP synthase epsilon chain (134 aa).

The protein belongs to the ATPase epsilon chain family. In terms of assembly, F-type ATPases have 2 components, CF(1) - the catalytic core - and CF(0) - the membrane proton channel. CF(1) has five subunits: alpha(3), beta(3), gamma(1), delta(1), epsilon(1). CF(0) has three main subunits: a, b and c.

It is found in the cell membrane. Its function is as follows. Produces ATP from ADP in the presence of a proton gradient across the membrane. The chain is ATP synthase epsilon chain from Clostridium botulinum (strain Alaska E43 / Type E3).